A 231-amino-acid polypeptide reads, in one-letter code: Flagellar L-ring protein (231 aa).

The first 18 residues, 1–18 (MKRFVSVVALSGVVSLAG), serve as a signal peptide directing secretion. The N-palmitoyl cysteine moiety is linked to residue C19. A lipid anchor (S-diacylglycerol cysteine) is attached at C19.

Belongs to the FlgH family. The basal body constitutes a major portion of the flagellar organelle and consists of four rings (L,P,S, and M) mounted on a central rod.

The protein localises to the cell outer membrane. Its subcellular location is the bacterial flagellum basal body. Functionally, assembles around the rod to form the L-ring and probably protects the motor/basal body from shearing forces during rotation. This chain is Flagellar L-ring protein, found in Pseudomonas fluorescens (strain Pf0-1).